Here is a 267-residue protein sequence, read N- to C-terminus: NAD kinase (267 aa).

Asp-45 serves as the catalytic Proton acceptor. NAD(+) contacts are provided by residues Asp-45–Gly-46, Asn-121–Glu-122, Lys-147, Asp-149, Thr-160–Ser-165, and Ala-184.

It belongs to the NAD kinase family. Requires a divalent metal cation as cofactor.

The protein resides in the cytoplasm. It catalyses the reaction NAD(+) + ATP = ADP + NADP(+) + H(+). In terms of biological role, involved in the regulation of the intracellular balance of NAD and NADP, and is a key enzyme in the biosynthesis of NADP. Catalyzes specifically the phosphorylation on 2'-hydroxyl of the adenosine moiety of NAD to yield NADP. This chain is NAD kinase, found in Lactobacillus gasseri (strain ATCC 33323 / DSM 20243 / BCRC 14619 / CIP 102991 / JCM 1131 / KCTC 3163 / NCIMB 11718 / NCTC 13722 / AM63).